Here is a 73-residue protein sequence, read N- to C-terminus: MASNKVSFIFILFLCVLSTAEFGEAQNPRGRKCEDPNGVDQKAKCYIYCNEQGFLGGSCQGYTNHYMCECYVG.

A signal peptide spans 1 to 25; it reads MASNKVSFIFILFLCVLSTAEFGEA. 3 disulfide bridges follow: Cys33-Cys59, Cys45-Cys68, and Cys49-Cys70.

Belongs to the DEFL family.

It localises to the secreted. The protein is Putative defensin-like protein 33 of Arabidopsis thaliana (Mouse-ear cress).